Consider the following 83-residue polypeptide: Acid shock protein (83 aa).

An N-terminal signal peptide occupies residues 1 to 21; it reads MKKVLALVVAAAMGLSSAAFA. Residues 22-40 are compositionally biased toward low complexity; it reads AETATPAKTATPAKTTQNT. Residues 22–56 constitute a propeptide that is removed on maturation; sequence AETATPAKTATPAKTTQNTQHHKKQHKKTVEQKAQ. Residues 22-83 are disordered; the sequence is AETATPAKTA…TSKTTSQPAA (62 aa). Basic residues predominate over residues 57–70; that stretch reads AAKKHQKKDGKKAP. Positions 71 to 83 are enriched in low complexity; it reads AKSTSKTTSQPAA.

The protein belongs to the Asr family. Post-translationally, proteolytic processing gives rise to the active protein.

The protein localises to the periplasm. Functionally, required for growth and/or survival at acidic conditions. The chain is Acid shock protein from Salmonella heidelberg (strain SL476).